The sequence spans 150 residues: Ribosome maturation factor RimP (150 aa).

This sequence belongs to the RimP family.

The protein localises to the cytoplasm. Required for maturation of 30S ribosomal subunits. This Klebsiella pneumoniae (strain 342) protein is Ribosome maturation factor RimP.